We begin with the raw amino-acid sequence, 103 residues long: Large ribosomal subunit protein eL43 (103 aa).

This sequence belongs to the eukaryotic ribosomal protein eL43 family.

The chain is Large ribosomal subunit protein eL43 (RPL37A) from Tetrahymena thermophila (strain SB210).